A 465-amino-acid polypeptide reads, in one-letter code: UPF0324 membrane protein CC_0425 (465 aa).

The disordered stretch occupies residues 97–132; that stretch reads HRQPDRAPPARASEQPLRQGRRALRRRPDQRRHRPR. The segment covering 115-132 has biased composition (basic residues); sequence QGRRALRRRPDQRRHRPR. 10 helical membrane passes run 135–157, 172–194, 219–241, 251–273, 286–308, 318–340, 352–374, 378–400, 405–427, and 442–464; these read AAAL…LMAV, LLAV…GAGL, AALG…GIGA, LAEA…LAAS, TALV…PPIA, AGVF…ASVS, LSRI…RTAQ, ISGL…ARGL, PALV…GAIS, and LAIL…TRIF.

Belongs to the UPF0324 family.

The protein resides in the cell membrane. This Caulobacter vibrioides (strain ATCC 19089 / CIP 103742 / CB 15) (Caulobacter crescentus) protein is UPF0324 membrane protein CC_0425.